A 147-amino-acid chain; its full sequence is Protein SprT-like (147 aa).

Positions 9–142 (AKVKEISLTY…CGKCRGKLIL (134 aa)) constitute a SprT-like domain. Zn(2+) is bound at residue H65. E66 is a catalytic residue. Position 69 (H69) interacts with Zn(2+).

It belongs to the SprT family. Zn(2+) is required as a cofactor.

It localises to the cytoplasm. The chain is Protein SprT-like (yciD) from Lactococcus lactis subsp. lactis (strain IL1403) (Streptococcus lactis).